The sequence spans 210 residues: Uracil phosphoribosyltransferase (210 aa).

5-phospho-alpha-D-ribose 1-diphosphate is bound by residues R78, R103, and 130 to 138; that span reads DPMLATGGT. Residues I193 and 198–200 each bind uracil; that span reads GDA. D199 lines the 5-phospho-alpha-D-ribose 1-diphosphate pocket.

This sequence belongs to the UPRTase family. Mg(2+) serves as cofactor.

The enzyme catalyses UMP + diphosphate = 5-phospho-alpha-D-ribose 1-diphosphate + uracil. It functions in the pathway pyrimidine metabolism; UMP biosynthesis via salvage pathway; UMP from uracil: step 1/1. Its activity is regulated as follows. Allosterically activated by GTP. Catalyzes the conversion of uracil and 5-phospho-alpha-D-ribose 1-diphosphate (PRPP) to UMP and diphosphate. The chain is Uracil phosphoribosyltransferase from Xanthomonas axonopodis pv. citri (strain 306).